A 148-amino-acid polypeptide reads, in one-letter code: Single-stranded DNA-binding protein, mitochondrial (148 aa).

The transit peptide at 1–16 directs the protein to the mitochondrion; it reads MFRRPVVQVLRQFVRH. In terms of domain architecture, SSB spans 30-141; that stretch reads LNRVQLLGRV…IIADNIIFLS (112 aa). Residues serine 67 and serine 79 each carry the phosphoserine modification. An N6-acetyllysine modification is found at lysine 113. At lysine 122 the chain carries N6-succinyllysine.

In terms of assembly, homotetramer. Interacts with MPG/AAG, through inhibition of its glycosylase activity it potentially prevents formation of DNA breaks in ssDNA, ensuring that base removal primarily occurs in dsDNA. Interacts with POLDIP2. Interacts with PRIMPOL.

The protein localises to the mitochondrion. It is found in the mitochondrion matrix. Its subcellular location is the mitochondrion nucleoid. Functionally, binds preferentially and cooperatively to pyrimidine rich single-stranded DNA (ss-DNA). In vitro, required to maintain the copy number of mitochondrial DNA (mtDNA) and plays a crucial role during mtDNA replication by stimulating the activity of the replisome components POLG and TWNK at the replication fork. Promotes the activity of the gamma complex polymerase POLG, largely by organizing the template DNA and eliminating secondary structures to favor ss-DNA conformations that facilitate POLG activity. In addition it is able to promote the 5'-3' unwinding activity of the mtDNA helicase TWNK. May also function in mtDNA repair. The sequence is that of Single-stranded DNA-binding protein, mitochondrial (SSBP1) from Bos taurus (Bovine).